Here is an 809-residue protein sequence, read N- to C-terminus: Leucine--tRNA ligase (809 aa).

The short motif at 40 to 50 (PYPSGRIHMGH) is the 'HIGH' region element. Positions 579 to 583 (KMSKS) match the 'KMSKS' region motif. Position 582 (K582) interacts with ATP.

Belongs to the class-I aminoacyl-tRNA synthetase family.

It localises to the cytoplasm. The catalysed reaction is tRNA(Leu) + L-leucine + ATP = L-leucyl-tRNA(Leu) + AMP + diphosphate. The protein is Leucine--tRNA ligase of Campylobacter lari (strain RM2100 / D67 / ATCC BAA-1060).